The chain runs to 326 residues: Olfactory receptor 11H2 (326 aa).

Topologically, residues 1–44 (MCPLTLHVTGLMNVSEPNSSFAFVNEFILQGFSCEWTIQIFLFS) are extracellular. 2 N-linked (GlcNAc...) asparagine glycosylation sites follow: N13 and N18. The chain crosses the membrane as a helical span at residues 45–65 (LFTTIYALTITGNGAIAFVLW). Residues 66–72 (CDRRLHT) lie on the Cytoplasmic side of the membrane. A helical transmembrane segment spans residues 73–93 (PMYMFLGNFSFLEIWYVSSTV). The Extracellular portion of the chain corresponds to 94 to 112 (PKMLVNFLSEKKNISFAGC). A glycan (N-linked (GlcNAc...) asparagine) is linked at N106. Residues C112 and C194 are joined by a disulfide bond. Residues 113–133 (FLQFYFFFSLGTSECLLLTVM) form a helical membrane-spanning segment. Residues 134–158 (AFDQYLAICRPLLYPNIMTGHLYAK) lie on the Cytoplasmic side of the membrane. A helical membrane pass occupies residues 159-179 (LVILCWVCGFLWFLIPIVLIS). The Extracellular portion of the chain corresponds to 180-216 (QKPFCGPNIIDHVVCDPGPLFALDCVSAPRIQLFCYT). A helical membrane pass occupies residues 217–237 (LSSLVIFGNFLFIIGSYTLVL). Topologically, residues 238 to 259 (KAVLGMPSSTGRHKAFSTCGSH) are cytoplasmic. Residues 260-280 (LAVVSLCYSPLMVMYVSPGLG) form a helical membrane-spanning segment. Over 281 to 287 (HSTGMQK) the chain is Extracellular. A helical membrane pass occupies residues 288 to 308 (IETLFYAMVTPLFNPLIYSLQ). Residues 309 to 326 (NKEIKAALRKVLGSSNII) lie on the Cytoplasmic side of the membrane.

It belongs to the G-protein coupled receptor 1 family.

It localises to the cell membrane. Odorant receptor. The protein is Olfactory receptor 11H2 (OR11H2) of Homo sapiens (Human).